Consider the following 1268-residue polypeptide: uncharacterized protein (1268 aa).

Residues 191-206 are compositionally biased toward low complexity; the sequence is KIVSVKPSKSSQQVDV. Disordered regions lie at residues 191-235 and 253-273; these read KIVS…SKKK and NCRS…SKGC. The span at 223-235 shows a compositional bias: basic and acidic residues; the sequence is RKPEKSSQDSKKK. A CCHC-type zinc finger spans residues 239 to 256; the sequence is PTCFYCNKKGHYATNCRS. In terms of domain architecture, Reverse transcriptase spans 465–644; the sequence is EMGVIVPITY…KQVTFLGFVD (180 aa). The 154-residue stretch at 844–997 folds into the Integrase catalytic domain; it reads VPEAPWKRIH…TPAECHFGRK (154 aa). Residues 1092-1268 form a disordered region; that stretch reads GDYSRSSVNP…RRERVRTTWR (177 aa). 2 stretches are compositionally biased toward polar residues: residues 1127 to 1143 and 1160 to 1169; these read VTSN…SRIT and GSCSPTNNDV. A compositionally biased stretch (low complexity) spans 1208–1221; sequence PSTSTGTPRGSTST. Over residues 1222 to 1249 the composition is skewed to polar residues; it reads QLGQASTRNGSRYTASGRNPSCQGNRYS. Residues 1257 to 1268 show a composition bias toward basic and acidic residues; sequence TARRERVRTTWR.

This is an uncharacterized protein from Caenorhabditis elegans.